Reading from the N-terminus, the 459-residue chain is tRNA modification GTPase MnmE (459 aa).

(6S)-5-formyl-5,6,7,8-tetrahydrofolate contacts are provided by arginine 21, glutamate 84, and lysine 123. Positions 219 to 380 (GMLTVIVGQP…LEKEIKQRVY (162 aa)) constitute a TrmE-type G domain. Asparagine 229 contributes to the K(+) binding site. GTP-binding positions include 229–234 (NVGKSS), 248–254 (TDIPGTT), and 273–276 (DTAG). Serine 233 contacts Mg(2+). K(+) contacts are provided by threonine 248, isoleucine 250, and threonine 253. Residue threonine 254 participates in Mg(2+) binding. Lysine 459 provides a ligand contact to (6S)-5-formyl-5,6,7,8-tetrahydrofolate.

The protein belongs to the TRAFAC class TrmE-Era-EngA-EngB-Septin-like GTPase superfamily. TrmE GTPase family. Homodimer. Heterotetramer of two MnmE and two MnmG subunits. K(+) serves as cofactor.

Its subcellular location is the cytoplasm. Its function is as follows. Exhibits a very high intrinsic GTPase hydrolysis rate. Involved in the addition of a carboxymethylaminomethyl (cmnm) group at the wobble position (U34) of certain tRNAs, forming tRNA-cmnm(5)s(2)U34. This is tRNA modification GTPase MnmE from Desulfitobacterium hafniense (strain Y51).